A 541-amino-acid chain; its full sequence is Methyl-accepting chemotaxis protein PcaY (541 aa).

The Cytoplasmic portion of the chain corresponds to 1–10 (MLANLKIRTG). Residues 11-31 (MFWVLSLFSLTLLFSTASAWW) form a helical membrane-spanning segment. The Periplasmic portion of the chain corresponds to 32 to 189 (AAVGSDQQIT…ESDRRLARAQ (158 aa)). A ligand-binding domain region spans residues 35 to 187 (GSDQQITELD…MLESDRRLAR (153 aa)). The helical transmembrane segment at 190-210 (LLSLCLLGMTVVLAVLCWAFI) threads the bilayer. The Cytoplasmic segment spans residues 211 to 541 (AQRVLHPLRE…MTALVGRFKV (331 aa)). The HAMP domain occupies 212 to 264 (QRVLHPLREAGGHFRRIASGDLSVPVQGQGNNEIGQLFHELQRMQQSQRDTLG). Residues 269–505 (CARQLDAAAS…EVDRNLLNIR (237 aa)) enclose the Methyl-accepting transducer domain. The tract at residues 322-341 (TSQTTSESNQLAAQSRRQVS) is disordered.

Belongs to the methyl-accepting chemotaxis (MCP) protein family.

Its subcellular location is the cell inner membrane. Its function is as follows. Chemotactic-signal transducers respond to changes in the concentration of attractants and repellents in the environment, transduce a signal from the outside to the inside of the cell, and facilitate sensory adaptation through the variation of the level of methylation. PcaY is responsible for the detection of multiple aromatic and hydroaromatic compounds that are metabolized through the beta-ketoadipate catabolic pathway, including vanillin, vanillate, 4-hydroxybenzoate (4-HBA), benzoate and protocatechuate. It also senses several nonmetabolizable aromatic compounds. In Pseudomonas putida (strain ATCC 700007 / DSM 6899 / JCM 31910 / BCRC 17059 / LMG 24140 / F1), this protein is Methyl-accepting chemotaxis protein PcaY.